The chain runs to 70 residues: MFTLKKSLLLLFFLGTINLSLCEEERNAEEERRDDPEERDVEVEKRFFPAILRVAAKVGPAVLCAITKKC.

Residues 1–22 (MFTLKKSLLLLFFLGTINLSLC) form the signal peptide. Residues 23 to 44 (EEERNAEEERRDDPEERDVEVE) constitute a propeptide that is removed on maturation. The cysteines at positions 64 and 70 are disulfide-linked.

This sequence belongs to the frog skin active peptide (FSAP) family. Brevinin subfamily. In terms of tissue distribution, expressed by the skin glands.

The protein localises to the secreted. Its function is as follows. Antimicrobial peptide. The polypeptide is Brevinin-1S (Odorrana schmackeri (Schmacker's frog)).